The following is a 251-amino-acid chain: NADH-quinone oxidoreductase subunit C (251 aa).

The segment at 1–34 (MSDANNTAGDANEVNPEKDLSAENLPGQRGQGGE) is disordered.

It belongs to the complex I 30 kDa subunit family. In terms of assembly, NDH-1 is composed of 14 different subunits. Subunits NuoB, C, D, E, F, and G constitute the peripheral sector of the complex.

The protein localises to the cell membrane. It catalyses the reaction a quinone + NADH + 5 H(+)(in) = a quinol + NAD(+) + 4 H(+)(out). Its function is as follows. NDH-1 shuttles electrons from NADH, via FMN and iron-sulfur (Fe-S) centers, to quinones in the respiratory chain. The immediate electron acceptor for the enzyme in this species is believed to be a menaquinone. Couples the redox reaction to proton translocation (for every two electrons transferred, four hydrogen ions are translocated across the cytoplasmic membrane), and thus conserves the redox energy in a proton gradient. This chain is NADH-quinone oxidoreductase subunit C, found in Streptomyces coelicolor (strain ATCC BAA-471 / A3(2) / M145).